A 374-amino-acid chain; its full sequence is Phosphatidyl-myo-inositol mannosyltransferase (374 aa).

Residues Tyr9 and Gly16 each contribute to the GDP-alpha-D-mannose site. Residues Gln18, 62-63 (YN), and Arg68 contribute to the a 1,2-diacyl-sn-glycero-3-phospho-(1D-myo-inositol) site. Residues Arg196, 201–202 (RK), 251–253 (VDD), Lys256, 274–278 (ESFGI), and Glu282 contribute to the GDP-alpha-D-mannose site.

Belongs to the glycosyltransferase group 1 family. Glycosyltransferase 4 subfamily. In terms of assembly, monomer. It depends on Mg(2+) as a cofactor.

It is found in the cell membrane. The catalysed reaction is a 1,2-diacyl-sn-glycero-3-phospho-(1D-myo-inositol) + GDP-alpha-D-mannose = a 1,2-diacyl-sn-glycero-3-phospho-[alpha-D-mannopyranosyl-(1&lt;-&gt;6)-D-myo-inositol] + GDP + H(+). It participates in phospholipid metabolism; phosphatidylinositol metabolism. Functionally, involved in the biosynthesis of phosphatidyl-myo-inositol mannosides (PIM) which are early precursors in the biosynthesis of lipomannans (LM) and lipoarabinomannans (LAM). Catalyzes the addition of a mannosyl residue from GDP-D-mannose (GDP-Man) to the position 2 of the carrier lipid phosphatidyl-myo-inositol (PI) to generate a phosphatidyl-myo-inositol bearing an alpha-1,2-linked mannose residue (PIM1). This is Phosphatidyl-myo-inositol mannosyltransferase from Mycobacterium leprae (strain TN).